Reading from the N-terminus, the 128-residue chain is Nanos homolog 1 (128 aa).

An essential for its translational repressor activity region spans residues 7 to 23 (FDSWSDYLGLSSLISRG). Positions 25–52 (QPQREGERPRWDVLSPASAEPLPSNESV) are disordered. The Nanos-type zinc-finger motif lies at 56-110 (GCGFCRSNREALSLYTSHRLRALDGRVLCPVLRGYTCPLCGANGDWAHTMRYCPL). Zn(2+)-binding residues include Cys-57, Cys-60, His-73, Cys-84, Cys-92, Cys-95, His-103, and Cys-108. Short sequence motifs (C2HC) lie at residues 57–84 (CGFCRSNREALSLYTSHRLRALDGRVLC) and 92–108 (CPLCGANGDWAHTMRYC).

The protein belongs to the nanos family. Interacts with ccnb1. In terms of tissue distribution, ovary and testis.

It localises to the cytoplasm. The protein localises to the perinuclear region. Functionally, acts as a translational repressor. Can mediate repression affecting different steps in the translation process: cap-driven, IRES-driven, polyadenylated RNAs or nonpolyadenylated RNAs. Essential for the development of primordial germ cells (PGCs) by ensuring their proper migration and survival. The sequence is that of Nanos homolog 1 (nanos1) from Xenopus laevis (African clawed frog).